Reading from the N-terminus, the 21-residue chain is SINNTGGSGNRRLDKNGFAGQ.

The segment at 1-21 is disordered; sequence SINNTGGSGNRRLDKNGFAGQ. N-linked (GlcNAc...) asparagine glycosylation occurs at N3.

It localises to the secreted. In Cornu aspersum (Brown garden snail), this protein is Dart gland peptide.